Consider the following 505-residue polypeptide: Protein disulfide-isomerase (505 aa).

A signal peptide spans 1–20 (MHKAQKFALGLLAAAAVATA). Thioredoxin domains follow at residues 21-128 (SDVV…QSLP) and 335-465 (FVAG…ENGK). Active-site nucleophile residues include Cys-50, Cys-53, Cys-385, and Cys-388. 2 disulfide bridges follow: Cys-50/Cys-53 and Cys-385/Cys-388. The segment at 470 to 505 (ISEDAEETSSATETTTETATKSEEAAKETATEHDEL) is disordered. Residues 477-488 (TSSATETTTETA) are compositionally biased toward low complexity. The span at 489-505 (TKSEEAAKETATEHDEL) shows a compositional bias: basic and acidic residues. Residues 502 to 505 (HDEL) carry the Prevents secretion from ER motif.

Belongs to the protein disulfide isomerase family.

It is found in the endoplasmic reticulum lumen. The catalysed reaction is Catalyzes the rearrangement of -S-S- bonds in proteins.. Functionally, participates in the folding of proteins containing disulfide bonds, may be involved in glycosylation, prolyl hydroxylation and triglyceride transfer. The sequence is that of Protein disulfide-isomerase from Humicola insolens (Soft-rot fungus).